The sequence spans 485 residues: Glutamate--tRNA ligase (485 aa).

The 'HIGH' region signature appears at 11–21 (PSPTGHLHIGG). The 'KMSKS' region motif lies at 252–256 (KMSKR). Lysine 255 contacts ATP.

This sequence belongs to the class-I aminoacyl-tRNA synthetase family. Glutamate--tRNA ligase type 1 subfamily. As to quaternary structure, monomer.

The protein localises to the cytoplasm. It carries out the reaction tRNA(Glu) + L-glutamate + ATP = L-glutamyl-tRNA(Glu) + AMP + diphosphate. Its function is as follows. Catalyzes the attachment of glutamate to tRNA(Glu) in a two-step reaction: glutamate is first activated by ATP to form Glu-AMP and then transferred to the acceptor end of tRNA(Glu). This Halalkalibacterium halodurans (strain ATCC BAA-125 / DSM 18197 / FERM 7344 / JCM 9153 / C-125) (Bacillus halodurans) protein is Glutamate--tRNA ligase.